The sequence spans 20 residues: Brevinin-1T (20 aa).

A disulfide bond links C14 and C20.

This sequence belongs to the frog skin active peptide (FSAP) family. Brevinin subfamily. As to expression, expressed by the skin glands.

The protein localises to the secreted. Its function is as follows. Antibacterial activity against representative Gram-negative and Gram-positive bacteria and exhibits a very high hemolytic activity. This is Brevinin-1T from Rana temporaria (European common frog).